Here is a 173-residue protein sequence, read N- to C-terminus: Probable calcium-binding protein CML14 (173 aa).

EF-hand domains lie at 21-56 (SQLK…LGLR), 57-92 (PTGD…VLTT), 97-132 (VDQA…LGQP), and 133-168 (LTFE…SALD). Ca(2+) contacts are provided by aspartate 34, asparagine 36, aspartate 38, serine 40, glutamate 45, aspartate 70, asparagine 72, asparagine 74, serine 76, glutamate 81, aspartate 110, aspartate 112, asparagine 114, glutamate 121, aspartate 146, aspartate 148, aspartate 150, and glutamate 157.

Functionally, potential calcium sensor. The polypeptide is Probable calcium-binding protein CML14 (CML14) (Oryza sativa subsp. japonica (Rice)).